The primary structure comprises 249 residues: ATP synthase subunit a, chloroplastic (249 aa).

A run of 5 helical transmembrane segments spans residues 40–60 (QVLITSWVVIAILLGSAVLAV), 97–117 (VPFIGTLFLFIFVSNWSGALL), 136–156 (INTTVALALLTSAAYFYAGLS), 201–221 (LVVVVLVSLVPLVVPIPVMFL), and 222–242 (GLFTSGIQALIFATLAAAYIG).

It belongs to the ATPase A chain family. In terms of assembly, F-type ATPases have 2 components, CF(1) - the catalytic core - and CF(0) - the membrane proton channel. CF(1) has five subunits: alpha(3), beta(3), gamma(1), delta(1), epsilon(1). CF(0) has four main subunits: a, b, b' and c.

It is found in the plastid. The protein localises to the chloroplast thylakoid membrane. Its function is as follows. Key component of the proton channel; it plays a direct role in the translocation of protons across the membrane. The sequence is that of ATP synthase subunit a, chloroplastic from Arabis hirsuta (Hairy rock-cress).